We begin with the raw amino-acid sequence, 725 residues long: LPS-assembly protein LptD (725 aa).

Residues 1-25 form the signal peptide; the sequence is MSLLSKLHLILYICLLLLPLRFVNA.

It belongs to the LptD family. In terms of assembly, component of the lipopolysaccharide transport and assembly complex. Interacts with LptE and LptA.

It localises to the cell outer membrane. Functionally, together with LptE, is involved in the assembly of lipopolysaccharide (LPS) at the surface of the outer membrane. The protein is LPS-assembly protein LptD of Nitrosomonas eutropha (strain DSM 101675 / C91 / Nm57).